A 518-amino-acid polypeptide reads, in one-letter code: Squalene monooxygenase 1,2 (518 aa).

A run of 2 helical transmembrane segments spans residues 3-23 (MAFV…WTIF) and 48-68 (GPDV…YALA). FAD is bound by residues 58–59 (VG), 78–79 (ER), Arg86, Phe91, Arg158, Val174, Asp337, and Met350. A helical transmembrane segment spans residues 448–468 (LFYHLFVISLSSIGQLLSPFP).

Belongs to the squalene monooxygenase family. FAD is required as a cofactor.

Its subcellular location is the membrane. The enzyme catalyses squalene + reduced [NADPH--hemoprotein reductase] + O2 = (S)-2,3-epoxysqualene + oxidized [NADPH--hemoprotein reductase] + H2O + H(+). The protein operates within terpene metabolism; lanosterol biosynthesis; lanosterol from farnesyl diphosphate: step 2/3. Its function is as follows. Catalyzes the stereospecific oxidation of squalene to (S)-2,3-epoxysqualene, and is considered to be a rate-limiting enzyme in steroid biosynthesis. The sequence is that of Squalene monooxygenase 1,2 (SQP1,2) from Brassica napus (Rape).